Reading from the N-terminus, the 249-residue chain is Exosome complex component Rrp41 (249 aa).

Belongs to the RNase PH family. Rrp41 subfamily. In terms of assembly, component of the archaeal exosome complex. Forms a hexameric ring-like arrangement composed of 3 Rrp41-Rrp42 heterodimers. The hexameric ring associates with a trimer of Rrp4 and/or Csl4 subunits.

It is found in the cytoplasm. Catalytic component of the exosome, which is a complex involved in RNA degradation. Has 3'-&gt;5' exoribonuclease activity. Can also synthesize heteromeric RNA-tails. The polypeptide is Exosome complex component Rrp41 (Pyrococcus abyssi (strain GE5 / Orsay)).